A 491-amino-acid polypeptide reads, in one-letter code: Glutamyl-tRNA(Gln) amidotransferase subunit A (491 aa).

Residues K81 and S156 each act as charge relay system in the active site. The Acyl-ester intermediate role is filled by S180.

The protein belongs to the amidase family. GatA subfamily. Heterotrimer of A, B and C subunits.

The enzyme catalyses L-glutamyl-tRNA(Gln) + L-glutamine + ATP + H2O = L-glutaminyl-tRNA(Gln) + L-glutamate + ADP + phosphate + H(+). Its function is as follows. Allows the formation of correctly charged Gln-tRNA(Gln) through the transamidation of misacylated Glu-tRNA(Gln) in organisms which lack glutaminyl-tRNA synthetase. The reaction takes place in the presence of glutamine and ATP through an activated gamma-phospho-Glu-tRNA(Gln). The protein is Glutamyl-tRNA(Gln) amidotransferase subunit A of Alcanivorax borkumensis (strain ATCC 700651 / DSM 11573 / NCIMB 13689 / SK2).